The chain runs to 389 residues: Methane monooxygenase component A beta chain (389 aa).

As to quaternary structure, m.capsulatus has two forms of methane monooxygenase, a soluble and a membrane-bound type. The soluble type consists of four components (A to D): protein A, comprising three chains, in an alpha-2, beta-2, gamma-2 configuration, is a nonheme iron protein containing an unusual mu-hydroxo bridge structure at its active site and interacts with both oxygen and methane.

It carries out the reaction methane + NADH + O2 + H(+) = methanol + NAD(+) + H2O. It catalyses the reaction methane + NADPH + O2 + H(+) = methanol + NADP(+) + H2O. Responsible for the initial oxygenation of methane to methanol in methanotrophs. It also catalyzes the monohydroxylation of a variety of unactivated alkenes, alicyclic, aromatic and heterocyclic compounds. The protein is Methane monooxygenase component A beta chain (mmoY) of Methylococcus capsulatus (strain ATCC 33009 / NCIMB 11132 / Bath).